The following is a 551-amino-acid chain: Probable NADH-ubiquinone oxidoreductase C3A11.07, mitochondrial (551 aa).

The transit peptide at 1–37 (MLFSRSILRGMPKAGIPKSPLALSASRNLRLANSVRF) directs the protein to the mitochondrion. 93–123 (TLVVLGAGWGATSILRTIDTSLFNVIVVSPR) contacts FAD. 255-291 (VHTVVVGGGPTGMEFAGEMADFIEDDLKSWYPELADD) is a binding site for NAD(+).

Belongs to the NADH dehydrogenase family.

Its subcellular location is the mitochondrion. It catalyses the reaction a quinone + NADH + H(+) = a quinol + NAD(+). The enzyme catalyses a ubiquinone + NADH + H(+) = a ubiquinol + NAD(+). Catalyzes the oxidation of NADH. This chain is Probable NADH-ubiquinone oxidoreductase C3A11.07, mitochondrial, found in Schizosaccharomyces pombe (strain 972 / ATCC 24843) (Fission yeast).